Reading from the N-terminus, the 277-residue chain is Deoxyguanosine kinase, mitochondrial (277 aa).

The transit peptide at 1-39 (MAAGRFLLRRLRASFRSPLRNALVDAPHARAMHDGGGPR) directs the protein to the mitochondrion. 45–53 (GNIAVGKST) is an ATP binding site. Residues E70, Y100, Q111, and R118 each coordinate substrate. Residue E141 is the Proton acceptor of the active site. Substrate is bound by residues R142 and D147. 206 to 208 (RDR) provides a ligand contact to ATP. E211 is a binding site for substrate. 254-256 (EDF) is a binding site for ATP.

Belongs to the DCK/DGK family. In terms of assembly, homodimer. As to expression, spleen and thymus. Expressed at much lower levels in the brain and liver.

It is found in the mitochondrion. The protein resides in the cytoplasm. It catalyses the reaction 2'-deoxyguanosine + ATP = dGMP + ADP + H(+). The enzyme catalyses 2'-deoxyadenosine + ATP = dAMP + ADP + H(+). Functionally, phosphorylates deoxyguanosine and deoxyadenosine in the mitochondrial matrix, with the highest efficiency for deoxyguanosine. In non-replicating cells, where cytosolic dNTP synthesis is down-regulated, mtDNA synthesis depends solely on DGUOK and TK2. Phosphorylates certain nucleoside analogs. Widely used as target of antiviral and chemotherapeutic agents. The chain is Deoxyguanosine kinase, mitochondrial (Dguok) from Mus musculus (Mouse).